The following is an 82-amino-acid chain: Penaeidin-3g (82 aa).

The signal sequence occupies residues 1 to 19 (MRLVVCLVFLASFALVCQG). Pyrrolidone carboxylic acid is present on Gln20. Intrachain disulfides connect Cys51-Cys66, Cys55-Cys73, and Cys67-Cys74. A Serine amide modification is found at Ser81.

It belongs to the penaeidin family.

Its subcellular location is the cytoplasmic granule. Functionally, antibacterial and antifungal activity. Presents chitin-binding activity. This Penaeus vannamei (Whiteleg shrimp) protein is Penaeidin-3g.